Consider the following 301-residue polypeptide: Glycine--tRNA ligase alpha subunit (301 aa).

The protein belongs to the class-II aminoacyl-tRNA synthetase family. As to quaternary structure, tetramer of two alpha and two beta subunits.

Its subcellular location is the cytoplasm. It carries out the reaction tRNA(Gly) + glycine + ATP = glycyl-tRNA(Gly) + AMP + diphosphate. In Neisseria meningitidis serogroup C (strain 053442), this protein is Glycine--tRNA ligase alpha subunit.